Consider the following 229-residue polypeptide: Non-structural protein P8 (229 aa).

A run of 2 helical transmembrane segments spans residues 119 to 139 and 162 to 182; these read IIHMTLLIAAVVALLTSVCTL and SLNPMLGVVNLGATFLMMVCA.

The protein belongs to the orbivirus NS3 family. Forms homooligomers via coiled-coil motif. Interacts with host OPTN; this interaction inhibits innate immune response.

It is found in the host cell membrane. Its subcellular location is the host Golgi apparatus. In terms of biological role, plays a role in the inhibition of host innate immune response. Interacts with host OPTN and thus inhibits the recruitment of TBK1 to the host Golgi apparatus. In turn, downstream partner IRF3 cannot be activated and IFN-beta production is impaired. Facilitates viral particle release either by increasing plasma membrane permeability through a viroporin-like activity or by viral budding. In Antilocapra americana (Pronghorn), this protein is Non-structural protein P8 (Segment-10).